Here is a 1186-residue protein sequence, read N- to C-terminus: ATP-dependent helicase/deoxyribonuclease subunit B (1186 aa).

In terms of domain architecture, UvrD-like helicase ATP-binding spans 1-308; sequence MSVKFLLGRA…AHLEKEWGKN (308 aa). An ATP-binding site is contributed by 8–15; it reads GRAGSGKT. The region spanning 288-620 is the UvrD-like helicase C-terminal domain; the sequence is SLPRFKDNPA…LVGTADRSRY (333 aa). [4Fe-4S] cluster contacts are provided by C822, C1144, C1147, and C1153.

Belongs to the helicase family. AddB/RexB type 1 subfamily. In terms of assembly, heterodimer of AddA and AddB. Requires Mg(2+) as cofactor. It depends on [4Fe-4S] cluster as a cofactor.

Its function is as follows. The heterodimer acts as both an ATP-dependent DNA helicase and an ATP-dependent, dual-direction single-stranded exonuclease. Recognizes the chi site generating a DNA molecule suitable for the initiation of homologous recombination. The AddB subunit has 5' -&gt; 3' nuclease activity but not helicase activity. In Natranaerobius thermophilus (strain ATCC BAA-1301 / DSM 18059 / JW/NM-WN-LF), this protein is ATP-dependent helicase/deoxyribonuclease subunit B.